Here is a 567-residue protein sequence, read N- to C-terminus: DNA ligase B (567 aa).

The active-site N6-AMP-lysine intermediate is the Lys-126.

Belongs to the NAD-dependent DNA ligase family. LigB subfamily.

The catalysed reaction is NAD(+) + (deoxyribonucleotide)n-3'-hydroxyl + 5'-phospho-(deoxyribonucleotide)m = (deoxyribonucleotide)n+m + AMP + beta-nicotinamide D-nucleotide.. Functionally, catalyzes the formation of phosphodiester linkages between 5'-phosphoryl and 3'-hydroxyl groups in double-stranded DNA using NAD as a coenzyme and as the energy source for the reaction. The sequence is that of DNA ligase B from Pseudomonas putida (strain W619).